The primary structure comprises 101 residues: MAKTSMKAREAKRAQLVAKFAEKRAALKAIIANPASSDEDRWDAVLKLQALPRDSSASRQRNRCNQTGRPHGFLRKFGLSRIKLREATMRGEVPGLRKASW.

It belongs to the universal ribosomal protein uS14 family. In terms of assembly, part of the 30S ribosomal subunit. Contacts proteins S3 and S10.

Its function is as follows. Binds 16S rRNA, required for the assembly of 30S particles and may also be responsible for determining the conformation of the 16S rRNA at the A site. This is Small ribosomal subunit protein uS14 from Shewanella sp. (strain MR-4).